The primary structure comprises 291 residues: MTEQVNSDTTSDTTTTITTVYISNLPFTASERDLHAFLNNYGASSVLIPTQTVRRFSKRHNSNPRKPLGIAFAQFANNTLALKAIQDLNGTVFQNQKLFLKLHVPYEADSTPDTDVKKPKEKNKVKKTPETAADTVYCHDLPDDITDSEIRELFQLYSPQEIWIYRSKVYRRKCIPFAPHQITAALVTLQSETPIGDICDSVAKTATLRGKSIIVKPAYVSKIQEIKQLVKDNLTNARDPPPAALAEPAPAPAPAPVEPAEQVQEGQDNAETNDVPPPPASSSDRPTVAAA.

The 88-residue stretch at 18–105 folds into the RRM domain; the sequence is TTVYISNLPF…QKLFLKLHVP (88 aa). The disordered stretch occupies residues 235-291; the sequence is TNARDPPPAALAEPAPAPAPAPVEPAEQVQEGQDNAETNDVPPPPASSSDRPTVAAA. Residues 239-257 show a composition bias toward pro residues; the sequence is DPPPAALAEPAPAPAPAPV.

This sequence belongs to the RRT5 family.

Its function is as follows. May be involved in the modulation of rDNA transcription. In Saccharomyces cerevisiae (strain Lalvin EC1118 / Prise de mousse) (Baker's yeast), this protein is Regulator of rDNA transcription protein 5 (RRT5).